The chain runs to 156 residues: Ribosome maturation factor RimP (156 aa).

Belongs to the RimP family.

Its subcellular location is the cytoplasm. Required for maturation of 30S ribosomal subunits. This Bacillus cytotoxicus (strain DSM 22905 / CIP 110041 / 391-98 / NVH 391-98) protein is Ribosome maturation factor RimP.